The sequence spans 488 residues: G-patch domain and KOW motifs-containing protein (488 aa).

The segment covering 1-11 (MAGRESPPPSA) has biased composition (pro residues). The disordered stretch occupies residues 1–20 (MAGRESPPPSAPSMAPISFG). A2 bears the N-acetylalanine mark. The residue at position 25 (S25) is a Phosphoserine; by PKA. The interval 72–97 (IQNGSRRQPLSKNPKPSSETSTVLMS) is disordered. A compositionally biased stretch (polar residues) spans 73 to 95 (QNGSRRQPLSKNPKPSSETSTVL). S115 carries the phosphoserine modification. In terms of domain architecture, G-patch spans 164–210 (VEAYGLAMLRGMGWKPGKGIGNTFSQVVKPRVNSIRPKGLGLGANRM). Disordered regions lie at residues 216–241 (ASVGSHHPPRPDGDRENDKEGQPQGL) and 295–367 (QEFD…PRNK). The span at 224-236 (PRPDGDRENDKEG) shows a compositional bias: basic and acidic residues. In terms of domain architecture, KOW 1 spans 231-258 (ENDKEGQPQGLMHGRAVVVLSGPYRGLY). The span at 307-331 (VSQTSTEQQNRATGTASSLKAAQNQ) shows a compositional bias: polar residues. Composition is skewed to basic and acidic residues over residues 332-341 (EDSKRRQKGS) and 349-363 (PDRQDGPVPKTEKAA). One can recognise a KOW 2 domain in the interval 401-428 (PDTCVCRTDEGRVLEDVREDMLETLIPK). Phosphoserine is present on S485.

This sequence belongs to the MOS2 family. As to quaternary structure, component of the minor spliceosome, which splices U12-type introns. Interacts with PRKX, PRKACB and DHX16. Post-translationally, phosphorylation regulates its ability to bind RNA.

Its subcellular location is the nucleus. In terms of biological role, RNA-binding protein involved in pre-mRNA splicing. As a component of the minor spliceosome, involved in the splicing of U12-type introns in pre-mRNAs. The sequence is that of G-patch domain and KOW motifs-containing protein (Gpkow) from Mus musculus (Mouse).